The following is a 92-amino-acid chain: Exodeoxyribonuclease 7 small subunit (92 aa).

Residues 71 to 84 show a composition bias toward low complexity; sequence AESAGTAKSAVAAD. Residues 71 to 92 form a disordered region; the sequence is AESAGTAKSAVAADSRGAADSA.

Belongs to the XseB family. As to quaternary structure, heterooligomer composed of large and small subunits.

It localises to the cytoplasm. It catalyses the reaction Exonucleolytic cleavage in either 5'- to 3'- or 3'- to 5'-direction to yield nucleoside 5'-phosphates.. Bidirectionally degrades single-stranded DNA into large acid-insoluble oligonucleotides, which are then degraded further into small acid-soluble oligonucleotides. This is Exodeoxyribonuclease 7 small subunit from Leifsonia xyli subsp. xyli (strain CTCB07).